A 63-amino-acid chain; its full sequence is Venom peptide 2a (63 aa).

The N-terminal stretch at 1–22 is a signal peptide; the sequence is MRGTSFILFAVVVILGFLNANA. AXPX repeat units follow at residues 22–25, 26–29, 32–35, 38–41, and 44–47; these read AEPL, ANPA, ANPD, and ANPE. Residues 23-48 constitute a propeptide that is removed on maturation; that stretch reads EPLANPAPLANPDPLANPDPLANPEA. L62 is modified (leucine amide).

Expressed by the venom gland.

The protein localises to the secreted. The protein resides in the target cell membrane. Antimicrobial peptide. Shows activities against Gram-positive bacteria (S.aureus MIC=50 uM and 200 ug/ml, and B.subtilis MIC=200 ug/ml), Gram-negative bacterium E.coli (MIC=100 uM and 200 ug/ml) and fungi (B.cinerea MIC=5 uM, S.cerevisiae MIC=128 ug/ml, S.pombe MIC=128 ug/ml, A.nidulans MIC=128 ug/ml, and C.albicans MIC=64-100 uM). Shows cytolytic activity against insect cell lines. Its hemolytic activity is controversial, as Baek and colleagues report no activity while Bea and colleagues note a hemolytic activity. In vivo, peptide injection in the vicinity of the head and thorax of lepidopteran larvae induces feeding disorder followed by death due to starvation. Is weakly lethal when tested on water flies (D.magna), but is not lethal on lady beetles (H.convergens). This is Venom peptide 2a from Eumenes pomiformis (Potter wasp).